Here is a 443-residue protein sequence, read N- to C-terminus: D-inositol 3-phosphate glycosyltransferase (443 aa).

Position 26 (His26) interacts with 1D-myo-inositol 3-phosphate. UDP-N-acetyl-alpha-D-glucosamine-binding positions include 32–33 and Gly40; that span reads QP. Residues 37–42, Lys95, Tyr128, Thr152, and Arg172 contribute to the 1D-myo-inositol 3-phosphate site; that span reads DAGGMN. The UDP-N-acetyl-alpha-D-glucosamine site is built by Arg246, Lys251, and Gln304. Residues Tyr313, Arg314, and Ala316 each coordinate Mg(2+). Positions 326 and 334 each coordinate UDP-N-acetyl-alpha-D-glucosamine. A Mg(2+)-binding site is contributed by Thr340.

The protein belongs to the glycosyltransferase group 1 family. MshA subfamily. As to quaternary structure, homodimer.

It carries out the reaction 1D-myo-inositol 3-phosphate + UDP-N-acetyl-alpha-D-glucosamine = 1D-myo-inositol 2-acetamido-2-deoxy-alpha-D-glucopyranoside 3-phosphate + UDP + H(+). Functionally, catalyzes the transfer of a N-acetyl-glucosamine moiety to 1D-myo-inositol 3-phosphate to produce 1D-myo-inositol 2-acetamido-2-deoxy-glucopyranoside 3-phosphate in the mycothiol biosynthesis pathway. The sequence is that of D-inositol 3-phosphate glycosyltransferase from Mycobacteroides abscessus (strain ATCC 19977 / DSM 44196 / CCUG 20993 / CIP 104536 / JCM 13569 / NCTC 13031 / TMC 1543 / L948) (Mycobacterium abscessus).